A 376-amino-acid chain; its full sequence is C2H2 type master regulator of conidiophore development brlA (376 aa).

Residues 20-29 (TSFSSASSSA) show a composition bias toward low complexity. Disordered stretches follow at residues 20-47 (TSFS…ELSL), 197-229 (HHHH…ASPN), and 241-267 (EAQR…PESG). Residues 34–44 (TPSSRRSTPNE) show a composition bias toward polar residues. A compositionally biased stretch (basic residues) spans 197 to 209 (HHHHHNHHQHHHA). The segment covering 219–229 (QLHSNTGASPN) has biased composition (polar residues). Over residues 241–256 (EAQRKTSELQRAQIRE) the composition is skewed to basic and acidic residues. A C2H2-type 1; degenerate zinc finger spans residues 277–301 (CKCDYPGCNKAFRRNEHLKRHKQTF). The C2H2-type 2 zinc-finger motif lies at 309–332 (FSCEFCGKDQFNRQDNLNNHRKLH). A disordered region spans residues 351–376 (IIEHEERSRKRRAPPKSKAEKRDYDF). The segment covering 367 to 376 (SKAEKRDYDF) has biased composition (basic and acidic residues).

Its subcellular location is the nucleus. Functionally, brlA, abaA and wetA are pivotal regulators of conidiophore development and conidium maturation. They act individually and together to regulate their own expression and that of numerous other sporulation-specific genes. Binds promoters of target genes at brlA response elements (BREs) containing the conserved sequence 5'-(C/A)(A/G)AGGG(G/A)-3'. This Hapsidospora chrysogena (Acremonium chrysogenum) protein is C2H2 type master regulator of conidiophore development brlA.